A 221-amino-acid polypeptide reads, in one-letter code: Lipoprotein-releasing system ATP-binding protein LolD (221 aa).

An ABC transporter domain is found at 6 to 220; it reads LTLKNVSKHY…YKLKHGALNM (215 aa). Residue 42–49 participates in ATP binding; that stretch reads GSSGSGKS.

The protein belongs to the ABC transporter superfamily. Lipoprotein translocase (TC 3.A.1.125) family. As to quaternary structure, the complex is composed of two ATP-binding proteins (LolD) and two transmembrane proteins (LolC and LolE).

The protein localises to the cell inner membrane. In terms of biological role, part of the ABC transporter complex LolCDE involved in the translocation of mature outer membrane-directed lipoproteins, from the inner membrane to the periplasmic chaperone, LolA. Responsible for the formation of the LolA-lipoprotein complex in an ATP-dependent manner. The polypeptide is Lipoprotein-releasing system ATP-binding protein LolD (Rickettsia bellii (strain RML369-C)).